Reading from the N-terminus, the 149-residue chain is UPF0178 protein lwe1471 (149 aa).

This sequence belongs to the UPF0178 family.

The protein is UPF0178 protein lwe1471 of Listeria welshimeri serovar 6b (strain ATCC 35897 / DSM 20650 / CCUG 15529 / CIP 8149 / NCTC 11857 / SLCC 5334 / V8).